Consider the following 468-residue polypeptide: 3-isopropylmalate dehydratase large subunit (468 aa).

3 residues coordinate [4Fe-4S] cluster: C346, C406, and C409.

The protein belongs to the aconitase/IPM isomerase family. LeuC type 1 subfamily. Heterodimer of LeuC and LeuD. [4Fe-4S] cluster is required as a cofactor.

The catalysed reaction is (2R,3S)-3-isopropylmalate = (2S)-2-isopropylmalate. It functions in the pathway amino-acid biosynthesis; L-leucine biosynthesis; L-leucine from 3-methyl-2-oxobutanoate: step 2/4. Its function is as follows. Catalyzes the isomerization between 2-isopropylmalate and 3-isopropylmalate, via the formation of 2-isopropylmaleate. The polypeptide is 3-isopropylmalate dehydratase large subunit (Pseudoalteromonas atlantica (strain T6c / ATCC BAA-1087)).